We begin with the raw amino-acid sequence, 311 residues long: Olfactory receptor 1073 (311 aa).

Residues 1–25 (MKQQNDTQILQFLLLGLSENTELQP) lie on the Extracellular side of the membrane. N-linked (GlcNAc...) asparagine glycosylation occurs at Asn-5. A helical transmembrane segment spans residues 26-46 (LIYWLFFSMYLVTVWGNLIII). Residues 47-57 (LATVLDFRLHT) are Cytoplasmic-facing. The helical transmembrane segment at 58-78 (AMYFFLCNLSFVDICLISTTI) threads the bilayer. The Extracellular segment spans residues 79 to 97 (PKMLANVHLNHKAITYEGC). The cysteines at positions 97 and 179 are disulfide-linked. The chain crosses the membrane as a helical span at residues 98 to 118 (IMQIYFFTLFVGLDNFLLAVM). Over 119-133 (AYDRFVAICHPLRYT) the chain is Cytoplasmic. The chain crosses the membrane as a helical span at residues 134 to 154 (SIMTPHLCMSLVLVSWIASVL). Asn-155 carries an N-linked (GlcNAc...) asparagine glycan. The Extracellular portion of the chain corresponds to 155 to 196 (NSSLQSFLVLQLSFCTEVEIPHFFCELSMLVHLACSDTFLSD). Residues 197–217 (MAMNVLAALLGGGCLVGILYS) traverse the membrane as a helical segment. Residues 218 to 244 (YSKIVSSIQAISSAEGKYKAFSTCVSH) lie on the Cytoplasmic side of the membrane. Residues 245–265 (LSVVSLFYCTLLGVYLSSAVT) form a helical membrane-spanning segment. Topologically, residues 266–271 (QNSHST) are extracellular. The chain crosses the membrane as a helical span at residues 272-292 (AATSLMYTVVTPMLNPFIYSL). Over 293-311 (RNDNIKRALKNFVKKKLEK) the chain is Cytoplasmic.

It belongs to the G-protein coupled receptor 1 family. In terms of tissue distribution, tongue specific.

The protein resides in the cell membrane. Functionally, possible taste receptor. This is Olfactory receptor 1073 (Olr1073) from Rattus norvegicus (Rat).